The sequence spans 198 residues: Cyclin-dependent kinase inhibitor 1B (198 aa).

A compositionally biased stretch (polar residues) spans M1–P11. Positions M1–G34 are disordered. S10 is modified (phosphoserine; by UHMK1). The segment covering E14–K25 has biased composition (basic and acidic residues). An interaction with CDK2 region spans residues D51 to P91. Y74 carries the phosphotyrosine; by SRC modification. Residues P85–T198 are disordered. Y88 carries the phosphotyrosine; by ABL, LYN, SRC and JAK2 modification. Residue Y89 is modified to Phosphotyrosine. Basic and acidic residues predominate over residues E126–P137. Positions K153–R169 match the Nuclear localization signal motif. At T157 the chain carries Phosphothreonine; by CaMK1, PKB/AKT1 and PIM1. T170 carries the post-translational modification Phosphothreonine. Residues S175 to Q186 are compositionally biased toward polar residues. T187 bears the Phosphothreonine; by PKB/AKT1, CDK1 and CDK2 mark. The residue at position 198 (T198) is a Phosphothreonine; by CaMK1, PKB/AKT1, RPS6KA1, RPS6KA3 and PIM1.

It belongs to the CDI family. Forms a ternary complex composed of CCNE1, CDK2 and CDKN1B. Interacts directly with CCNE1; the interaction is inhibited by CDK2-dependent phosphorylation on Thr-187. Interacts with COPS5, subunit of the COP9 signalosome complex; the interaction leads to CDKN1B degradation. Interacts with NUP50; the interaction leads to nuclear import and degradation of phosphorylated CDKN1B. Interacts with CCND1 and SNX6. Interacts (Thr-198-phosphorylated form) with 14-3-3 proteins, binds strongly YWHAQ, weakly YWHAE and YWHAH, but not YWHAB nor YWHAZ; the interaction with YWHAQ results in translocation to the cytoplasm. Interacts with AKT1 and LYN; the interactions lead to cytoplasmic mislocation, phosphorylation of CDKN1B and inhibition of cell cycle arrest. Forms a ternary complex with CCNA2 and CDK2; CDKN1B inhibits the kinase activity of CDK2 through conformational rearrangements. Interacts (unphosphorylated form) with CDK2. Forms a complex with CDK2 and SPDYA, but does not directly interact with SPDYA. Forms a ternary complex composed of cyclin D, CDK4 and CDKN1B. Interacts (phosphorylated on Tyr-88 and Tyr-89) with CDK4; the interaction is required for cyclin D and CDK4 complex assembly, induces nuclear translocation and activates the CDK4 kinase activity. Interacts with GRB2. Interacts with PIM1. Identified in a complex with SKP1, SKP2 and CKS1B. Interacts with UHMK1; the interaction leads to cytoplasmic mislocation, phosphorylation of CDKN1B and inhibition of cell cycle arrest. Also interacts with CDK1. Dephosphorylated on Thr-187 by PPM1H, leading to CDKN1B stability. Interacts with HSPA8; the interaction may be associated with susceptibility to ubiquitination. In terms of processing, phosphorylated; phosphorylation occurs on serine, threonine and tyrosine residues. Phosphorylation on Ser-10 is the major site of phosphorylation in resting cells, takes place at the G(0)-G(1) phase and leads to protein stability. Phosphorylation on other sites is greatly enhanced by mitogens, growth factors, cMYC and in certain cancer cell lines. The phosphorylated form found in the cytoplasm is inactivate. Phosphorylation on Thr-198 is required for interaction with 14-3-3 proteins. Phosphorylation on Thr-187, by CDK1 and CDK2 leads to protein ubiquitination and proteasomal degradation. Tyrosine phosphorylation promotes this process. Phosphorylation by PKB/AKT1 can be suppressed by LY294002, an inhibitor of the catalytic subunit of PI3K. Phosphorylation on Tyr-88 and Tyr-89 has no effect on binding CDK2, but is required for binding CDK4. Dephosphorylated on tyrosine residues by G-CSF. Ubiquitinated; in the cytoplasm by the KPC complex (composed of RNF123/KPC1 and UBAC1/KPC2) and, in the nucleus, by SCF(SKP2). The latter requires prior phosphorylation on Thr-187. Ubiquitinated; by a TRIM21-containing SCF(SKP2)-like complex; leads to its degradation. Post-translationally, subject to degradation in the lysosome. Interaction with SNX6 promotes lysosomal degradation. As to expression, expressed in kidney (at protein level). Expressed in all tissues tested. Highest levels in skeletal muscle, lowest in liver and kidney.

Its subcellular location is the nucleus. The protein resides in the cytoplasm. It localises to the endosome. Important regulator of cell cycle progression. Inhibits the kinase activity of CDK2 bound to cyclin A, but has little inhibitory activity on CDK2 bound to SPDYA. Involved in G1 arrest. Potent inhibitor of cyclin E- and cyclin A-CDK2 complexes. Forms a complex with cyclin type D-CDK4 complexes and is involved in the assembly, stability, and modulation of CCND1-CDK4 complex activation. Acts either as an inhibitor or an activator of cyclin type D-CDK4 complexes depending on its phosphorylation state and/or stoichometry. The sequence is that of Cyclin-dependent kinase inhibitor 1B from Homo sapiens (Human).